Consider the following 449-residue polypeptide: Histidinol dehydrogenase (449 aa).

NAD(+) contacts are provided by tyrosine 135, glutamine 199, and asparagine 229. Residues threonine 252, glutamine 274, and histidine 277 each coordinate substrate. The Zn(2+) site is built by glutamine 274 and histidine 277. Active-site proton acceptor residues include glutamate 343 and histidine 344. Residues histidine 344, aspartate 377, glutamate 431, and histidine 436 each contribute to the substrate site. Position 377 (aspartate 377) interacts with Zn(2+). Histidine 436 lines the Zn(2+) pocket.

The protein belongs to the histidinol dehydrogenase family. It depends on Zn(2+) as a cofactor.

It catalyses the reaction L-histidinol + 2 NAD(+) + H2O = L-histidine + 2 NADH + 3 H(+). Its pathway is amino-acid biosynthesis; L-histidine biosynthesis; L-histidine from 5-phospho-alpha-D-ribose 1-diphosphate: step 9/9. In terms of biological role, catalyzes the sequential NAD-dependent oxidations of L-histidinol to L-histidinaldehyde and then to L-histidine. The polypeptide is Histidinol dehydrogenase (Corynebacterium diphtheriae (strain ATCC 700971 / NCTC 13129 / Biotype gravis)).